We begin with the raw amino-acid sequence, 153 residues long: Arginine repressor (153 aa).

It belongs to the ArgR family.

Its subcellular location is the cytoplasm. It functions in the pathway amino-acid biosynthesis; L-arginine biosynthesis [regulation]. Regulates arginine biosynthesis genes. This Syntrophomonas wolfei subsp. wolfei (strain DSM 2245B / Goettingen) protein is Arginine repressor.